Reading from the N-terminus, the 317-residue chain is Transcription factor elt-3 (317 aa).

A disordered region spans residues 1–34 (METANYYLPSPPYSSTSSSDSRESRMNTPIPTTY). The GATA-type zinc finger occupies 244 to 268 (CSNCKTRETTLWRRNGEGGVECNAC). Residues 290–317 (KRNRRPRNESPNSAIRNTHQRHGHAAAC) are disordered. Over residues 307-317 (THQRHGHAAAC) the composition is skewed to basic residues.

As to quaternary structure, interacts with skn-1; interaction may enhance transcriptional activation of target genes. As to expression, expressed in head, trunk and tail. Expression decreases with age in the hypodermal cells and the pharyngeal-intestinal valve cells in the head, eventually showing little or no expression in about 14 day old worms. Expressed in hypodermal, but not in intestinal, cells at 1 day of age. Expression in the hypodermal and intestinal cells in the trunk region decreases quickly between day 3 and day 5 of adulthood. Expression in the tail between days 3 and 14 stays approximately uniform.

Its subcellular location is the nucleus. Functionally, transcription factor. Required, in concert with signal transducer and transcription factor sta-2, for up-regulation of the vacuolar H(+)-ATPase and acceleration of lysosome maturation at molt. Involved in regulating hypodermal development, perhaps acting downstream of transcription factor elt-1. Modulates environmentally induced changes in collagen gene expression, including rol-6, sqt-1, lon-3, and dpy-13. Involved in regulating expression of various genes, including gst-4, sod-3, ugt-9, and col-144. In response to oxidative stress, required to up-regulate expression of gst-4 mRNA. Regulated by the Insulin/IGF-1-like signaling (IIS) mediated pathway. Plays a role in longevity. May regulate the expression of genes that control sensitivity to osmotic stress, in conjunction with the GATA region-binding transcription factor elt-2. May form a transcriptional circuit with GATA factors egl-18 and elt-6. The sequence is that of Transcription factor elt-3 from Caenorhabditis elegans.